Reading from the N-terminus, the 449-residue chain is Probable phosphoglucosamine mutase (449 aa).

The active-site Phosphoserine intermediate is the Ser-96. Positions 96, 233, 235, and 237 each coordinate Mg(2+). Position 96 is a phosphoserine (Ser-96).

Belongs to the phosphohexose mutase family. Mg(2+) serves as cofactor. Activated by phosphorylation.

The enzyme catalyses alpha-D-glucosamine 1-phosphate = D-glucosamine 6-phosphate. In terms of biological role, catalyzes the conversion of glucosamine-6-phosphate to glucosamine-1-phosphate. This is Probable phosphoglucosamine mutase from Thermococcus gammatolerans (strain DSM 15229 / JCM 11827 / EJ3).